Consider the following 118-residue polypeptide: Late expression factor 11 (118 aa).

Belongs to the baculoviridae LEF-11 family.

Its function is as follows. Involved in late/very late gene activation. This chain is Late expression factor 11 (LEF-11), found in Adoxophyes honmai nucleopolyhedrovirus.